Reading from the N-terminus, the 250-residue chain is Small ribosomal subunit protein uS2 (250 aa).

It belongs to the universal ribosomal protein uS2 family.

The chain is Small ribosomal subunit protein uS2 from Polaromonas sp. (strain JS666 / ATCC BAA-500).